The primary structure comprises 426 residues: Enolase (426 aa).

A (2R)-2-phosphoglycerate-binding site is contributed by Gln163. The active-site Proton donor is the Glu205. Residues Asp242, Glu283, and Asp310 each contribute to the Mg(2+) site. Residues Lys335, Arg364, Ser365, and Lys386 each coordinate (2R)-2-phosphoglycerate. The active-site Proton acceptor is Lys335.

Belongs to the enolase family. Mg(2+) serves as cofactor.

It is found in the cytoplasm. The protein localises to the secreted. The protein resides in the cell surface. It carries out the reaction (2R)-2-phosphoglycerate = phosphoenolpyruvate + H2O. Its pathway is carbohydrate degradation; glycolysis; pyruvate from D-glyceraldehyde 3-phosphate: step 4/5. Functionally, catalyzes the reversible conversion of 2-phosphoglycerate (2-PG) into phosphoenolpyruvate (PEP). It is essential for the degradation of carbohydrates via glycolysis. This is Enolase from Clavibacter michiganensis subsp. michiganensis (strain NCPPB 382).